The chain runs to 793 residues: Putative glutamate--cysteine ligase 2-3 (793 aa).

The carboxylate-amine ligase stretch occupies residues 1 to 407 (MLASDPRKVG…RFWDRGDTAD (407 aa)). The segment at 367–390 (TEHLPDVEVPPPREPGPKSTGAGR) is disordered. Residues 408 to 793 (MTWTESTELD…ALTRLEDQSG (386 aa)) form a peptidase M20 region.

It in the C-terminal section; belongs to the glutamate--cysteine ligase type 2 family. YbdK subfamily.

The enzyme catalyses L-cysteine + L-glutamate + ATP = gamma-L-glutamyl-L-cysteine + ADP + phosphate + H(+). ATP-dependent carboxylate-amine ligase which exhibits weak glutamate--cysteine ligase activity. This chain is Putative glutamate--cysteine ligase 2-3, found in Rhodococcus jostii (strain RHA1).